We begin with the raw amino-acid sequence, 667 residues long: Probable Na(+)/H(+) antiporter nhx-9 (667 aa).

The next 8 helical transmembrane spans lie at 41–61, 73–93, 97–117, 128–148, 165–185, 192–212, 236–256, and 268–288; these read VYVITVWLLIASLAKILFNLM, LLIIVGLALGWILHQTSLSGA, SHTFFLYLLPPIIFDAGYFMP, VLVFSVFGTIWNTFAIGGSLL, ILVFSALISAVDPVAVIAVFE, FLFINVFGEALFNDGVTVVLY, LSFFVVALGGAAVGIIFAIAA, and ILAPVFIFVLPYMAYLTAEMV. A glycan (N-linked (GlcNAc...) asparagine) is linked at Asn-310. 4 consecutive transmembrane segments (helical) span residues 325-345, 351-371, 390-410, and 418-438; these read MLAQSSETVIFMFLGLSTISS, LYFICATLFFCLIYRAIGIVV, FIMSYGGLRGAIAYGLVVSIP, and MFITATIAVIYFTVFLQGITI. The tract at residues 637-667 is disordered; the sequence is TEQLPSETPFHSGRRQSTGDLNATRRADFNV. Thr-644 is modified (phosphothreonine).

Belongs to the monovalent cation:proton antiporter 1 (CPA1) transporter (TC 2.A.36) family. In terms of processing, phosphorylated. In terms of tissue distribution, in early stage larva, expressed in the twin excretory cell processes. At later larval stages, expression is more restricted, resulting in a 'beads on a chain' appearance.

It is found in the cell membrane. In terms of biological role, serves some physiological function other than regulation of cellular pH. The sequence is that of Probable Na(+)/H(+) antiporter nhx-9 (nhx-9) from Caenorhabditis elegans.